The following is a 440-amino-acid chain: 3-phosphoshikimate 1-carboxyvinyltransferase (440 aa).

Lys26, Ser27, and Arg31 together coordinate 3-phosphoshikimate. Residue Lys26 participates in phosphoenolpyruvate binding. 2 residues coordinate phosphoenolpyruvate: Gly99 and Arg127. 4 residues coordinate 3-phosphoshikimate: Ser172, Gln174, Asp320, and Lys347. Gln174 lines the phosphoenolpyruvate pocket. The Proton acceptor role is filled by Asp320. Phosphoenolpyruvate-binding residues include Arg351 and Arg392.

The protein belongs to the EPSP synthase family. As to quaternary structure, monomer.

It is found in the cytoplasm. It catalyses the reaction 3-phosphoshikimate + phosphoenolpyruvate = 5-O-(1-carboxyvinyl)-3-phosphoshikimate + phosphate. Its pathway is metabolic intermediate biosynthesis; chorismate biosynthesis; chorismate from D-erythrose 4-phosphate and phosphoenolpyruvate: step 6/7. In terms of biological role, catalyzes the transfer of the enolpyruvyl moiety of phosphoenolpyruvate (PEP) to the 5-hydroxyl of shikimate-3-phosphate (S3P) to produce enolpyruvyl shikimate-3-phosphate and inorganic phosphate. The polypeptide is 3-phosphoshikimate 1-carboxyvinyltransferase (Xanthomonas oryzae pv. oryzae (strain MAFF 311018)).